We begin with the raw amino-acid sequence, 264 residues long: COP9 signalosome complex subunit 7b (264 aa).

Alanine 2 is modified (N-acetylalanine). The 158-residue stretch at 2 to 159 folds into the PCI domain; it reads AGEQKPSSNL…QLLEVDFCIG (158 aa). Positions 188–237 form a coiled coil; that stretch reads IEQQVLRANQYKENHNRTQQQVEAEVTNIKKTLKATASSSAQEMEQQLAE. Positions 223-232 are enriched in polar residues; it reads TASSSAQEME. A disordered region spans residues 223–264; it reads TASSSAQEMEQQLAERECPPHAEQRQPTKKMSKVKGLVSSRH. A compositionally biased stretch (basic and acidic residues) spans 235–248; that stretch reads LAERECPPHAEQRQ. Phosphothreonine is present on serine 261. At arginine 263 the chain carries Phosphoserine.

The protein belongs to the CSN7/EIF3M family. CSN7 subfamily. As to quaternary structure, component of the CSN complex, composed of COPS1/GPS1, COPS2, COPS3, COPS4, COPS5, COPS6, COPS7 (COPS7A or COPS7B), COPS8 and COPS9 isoform 1. In the complex, it probably interacts directly with COPS1, COPS2, COPS4, COPS5, COPS6 and COPS8. Interacts with EIF3S6. (Microbial infection) Interacts with vaccinia virus protein C9L.

The protein resides in the cytoplasm. It localises to the nucleus. Its function is as follows. Component of the COP9 signalosome complex (CSN), a complex involved in various cellular and developmental processes. The CSN complex is an essential regulator of the ubiquitin (Ubl) conjugation pathway by mediating the deneddylation of the cullin subunits of SCF-type E3 ligase complexes, leading to decrease the Ubl ligase activity of SCF-type complexes such as SCF, CSA or DDB2. The complex is also involved in phosphorylation of p53/TP53, JUN, I-kappa-B-alpha/NFKBIA, ITPK1 and IRF8/ICSBP, possibly via its association with CK2 and PKD kinases. CSN-dependent phosphorylation of TP53 and JUN promotes and protects degradation by the Ubl system, respectively. The sequence is that of COP9 signalosome complex subunit 7b (COPS7B) from Homo sapiens (Human).